An 846-amino-acid polypeptide reads, in one-letter code: MAKRFSAMKDFARCKKPRLDVSVTRGSARPSPPRNNFDGILWDDDDDVILMATQLAEAEIEAEERKKKGGTEVDIGNSEVTFSEFAPTFQGSTSTQQMFPPPPPPQKKPTSLDMDAIFADDDDFDFLAVTLMDSEPQKMPEPKTSTSRITTSSISVQQKTTTTTTINATQSRQQEHQLKFLMDRIEALKRENAQLEKNLGDSKERNEIKSGEVSLLRDELKHLRQQLQASKMEKLALADETNRDCNKKVAEAAKQIAAKDIELKIKNAEFSKLKTQQKAHERSMNSSMSILQAAPDPLEKRLSLRLNRLNIHRSVPGLKTDNGSVFEYSENEDQTKKRRNHFELELKQLLLHYARLQAKPESVDNLLPRILSSVGKVFTEFASYAQSLDFPHNCMLYPYNPHNLEEEVHRISLTHQSCLYDNEKAVPLRRFIATLALICRREERISRGLTEWKENDLGLLDMAIEAITKLGFSYEVGQHFGLLEALTSLLNSLLQENALLQHNEELLFDLLKQLVFTRPSPWVFAELSSCFLSCLRHPQLMDKMCVNSPKDCFVSDRVRSVYRFGPDSCLLQVYAGLLELCFFSETPLRQDYFQLLLKIGGNHVRFAFECFKNPPDFILEMLPYFADDGDEDSSDGTLMKTGTSLSFNSTGAVQGSVSNGSTSASVSNPNQNSNSSTTQRGKGCECYVKLCLSAVTIVFQVMHQWMLHSRKAGTEEVGEISRIAVHLLSLVFHEYYLTCLFRDSEETTKHYLSLICNWWSEHANLLGFQSIHLRLLNQLVKAHFMLKPLHLEAKPNNPVNDLSEWKRIVKNADDQRAVKSAVTVDPSKLLNTDFFSALKREENTFE.

3 disordered regions span residues 20–40 (DVSV…FDGI), 90–109 (QGST…QKKP), and 135–162 (EPQK…KTTT). Positions 144-162 (TSTSRITTSSISVQQKTTT) are enriched in low complexity. Coiled coils occupy residues 168–240 (ATQS…LADE) and 327–359 (EYSE…LQAK). The short motif at 504–510 (EELLFDL) is the EEXXXDL motif element. Residues 651–681 (GAVQGSVSNGSTSASVSNPNQNSNSSTTQRG) are disordered. Positions 655–676 (GSVSNGSTSASVSNPNQNSNSS) are enriched in low complexity.

This sequence belongs to the ATRIP family. Interacts with ATR/mei-41. As to expression, highly expressed in the oocyte and nurse cells from stage 5 onward and in embryos prior to during nuclear division 14. Then, it decreases to background levels during interphase 14. Weakly or not expressed in stage embryos and imaginal disks.

The protein resides in the cytoplasm. Its function is as follows. DNA damage checkpoint protein required for chromosome break repair and for genomic stability during development. The polypeptide is ATR-interacting protein mus304 (mus304) (Drosophila melanogaster (Fruit fly)).